The primary structure comprises 126 residues: Histone H2B.5 (126 aa).

The span at 1-27 (MAPKAEKKPSEKAPKADKKITKEGGSE) shows a compositional bias: basic and acidic residues. A disordered region spans residues 1 to 34 (MAPKAEKKPSEKAPKADKKITKEGGSERKKKTKK). Position 2 is a n,N,N-trimethylalanine; alternate (Ala-2). Ala-2 is subject to N,N-dimethylalanine; alternate. Ala-2 carries the post-translational modification N-methylalanine; alternate. Lys-4 is modified (N6-methyllysine). 4 positions are modified to N6-acetyllysine: Lys-7, Lys-12, Lys-18, and Lys-19. A Glycyl lysine isopeptide (Lys-Gly) (interchain with G-Cter in ubiquitin) cross-link involves residue Lys-122.

Belongs to the histone H2B family. In terms of assembly, the nucleosome is a histone octamer containing two molecules each of H2A, H2B, H3 and H4 assembled in one H3-H4 heterotetramer and two H2A-H2B heterodimers. The octamer wraps approximately 147 bp of DNA. Post-translationally, can be acetylated to form H2BK6ac, H2BK33ac and H2BK34ac. Monoubiquitinated by BRE1 to form H2BK143ub1 and deubiquitinated by UBP26. Required for heterochromatic histone H3 di- and trimethylation at H3K4me. May give a specific tag for epigenetic transcriptional activation.

The protein resides in the nucleus. Its subcellular location is the chromosome. Core component of nucleosome. Nucleosomes wrap and compact DNA into chromatin, limiting DNA accessibility to the cellular machineries which require DNA as a template. Histones thereby play a central role in transcription regulation, DNA repair, DNA replication and chromosomal stability. DNA accessibility is regulated via a complex set of post-translational modifications of histones, also called histone code, and nucleosome remodeling. This Arabidopsis thaliana (Mouse-ear cress) protein is Histone H2B.5.